Reading from the N-terminus, the 281-residue chain is MASLRFSVTFPALFSLLLSLWVVDACTSRKLISNNEQEGQNISHLFKDGEFEDPTMYMFFKISDLKLGTKLPIYFNKNDLRKVPPLLTRQEADLIPFSESNLDFLLNHFSISKDSPQGEAMKETLQRCDFKAIEGEYKFCGTSLESMLDLAKKTIASNADLKVMTTKVMVPDQNRISYALHNYTFAEVPKELDGIKVLGCHRMPYPYVVYYCHGHKSGTKVFEVNLMSDDGIQLVVGPAVCHMDTSMWNADHVAFKVLKIEPRSAPVCHFFPLDNIVWVSK.

An N-terminal signal peptide occupies residues 1 to 25 (MASLRFSVTFPALFSLLLSLWVVDA). A BURP domain is found at 59-281 (FFKISDLKLG…PLDNIVWVSK (223 aa)).

As to expression, expressed in the radicle of germinating seeds 2 days post-imbibition (DPI) and in roots of 30-DPI young plants. Expressed in the embryo and seed coat tissues of developing seeds. The protein accumulates only in seeds and only long after transcript accumulation becomes evident.

The protein resides in the protein storage vacuole. This chain is BURP domain-containing protein BNM2C, found in Brassica napus (Rape).